A 364-amino-acid polypeptide reads, in one-letter code: S-adenosylmethionine:tRNA ribosyltransferase-isomerase (364 aa).

The protein belongs to the QueA family. Monomer.

Its subcellular location is the cytoplasm. The catalysed reaction is 7-aminomethyl-7-carbaguanosine(34) in tRNA + S-adenosyl-L-methionine = epoxyqueuosine(34) in tRNA + adenine + L-methionine + 2 H(+). The protein operates within tRNA modification; tRNA-queuosine biosynthesis. In terms of biological role, transfers and isomerizes the ribose moiety from AdoMet to the 7-aminomethyl group of 7-deazaguanine (preQ1-tRNA) to give epoxyqueuosine (oQ-tRNA). The polypeptide is S-adenosylmethionine:tRNA ribosyltransferase-isomerase (Synechococcus sp. (strain CC9902)).